A 217-amino-acid chain; its full sequence is Cytochrome b5 domain-containing protein 1 (217 aa).

A Cytochrome b5 heme-binding domain is found at 6–72; that stretch reads PRFYTPREVS…NPKTGDVKTH (67 aa). 2 residues coordinate heme: H41 and H72.

This sequence belongs to the cytochrome b5 family.

Its subcellular location is the cytoplasm. It localises to the cytoskeleton. The protein resides in the cilium axoneme. Its function is as follows. Radial spoke stalk protein that binds heme under oxidizing conditions. Required for the coordinated beating of multiple cilia maybe by functioning in a redox signaling pathway. The sequence is that of Cytochrome b5 domain-containing protein 1 (cyb5d1) from Xenopus tropicalis (Western clawed frog).